The sequence spans 368 residues: Phospho-N-acetylmuramoyl-pentapeptide-transferase (368 aa).

Helical transmembrane passes span 30-50, 72-92, 99-119, 139-159, 170-190, 201-221, 238-258, 264-286, and 345-365; these read AAAV…IKYL, LPTM…FLWA, VWLI…DDYM, VLLG…SVLL, LTID…TAVS, GLAS…AYLA, GGEI…FLWF, EIIM…ALLI, and KIVI…LMTL.

This sequence belongs to the glycosyltransferase 4 family. MraY subfamily. Mg(2+) serves as cofactor.

It is found in the cell inner membrane. The catalysed reaction is UDP-N-acetyl-alpha-D-muramoyl-L-alanyl-gamma-D-glutamyl-meso-2,6-diaminopimeloyl-D-alanyl-D-alanine + di-trans,octa-cis-undecaprenyl phosphate = di-trans,octa-cis-undecaprenyl diphospho-N-acetyl-alpha-D-muramoyl-L-alanyl-D-glutamyl-meso-2,6-diaminopimeloyl-D-alanyl-D-alanine + UMP. It functions in the pathway cell wall biogenesis; peptidoglycan biosynthesis. In terms of biological role, catalyzes the initial step of the lipid cycle reactions in the biosynthesis of the cell wall peptidoglycan: transfers peptidoglycan precursor phospho-MurNAc-pentapeptide from UDP-MurNAc-pentapeptide onto the lipid carrier undecaprenyl phosphate, yielding undecaprenyl-pyrophosphoryl-MurNAc-pentapeptide, known as lipid I. The chain is Phospho-N-acetylmuramoyl-pentapeptide-transferase from Chlorobium limicola (strain DSM 245 / NBRC 103803 / 6330).